The chain runs to 480 residues: Cysteine--tRNA ligase (480 aa).

A Zn(2+)-binding site is contributed by C29. The 'HIGH' region motif lies at P31–H41. Residues C220, H245, and E249 each contribute to the Zn(2+) site. A 'KMSKS' region motif is present at residues K276–S280. K279 is an ATP binding site.

It belongs to the class-I aminoacyl-tRNA synthetase family. As to quaternary structure, monomer. Zn(2+) serves as cofactor.

It localises to the cytoplasm. The enzyme catalyses tRNA(Cys) + L-cysteine + ATP = L-cysteinyl-tRNA(Cys) + AMP + diphosphate. This is Cysteine--tRNA ligase from Thermus thermophilus (strain ATCC 27634 / DSM 579 / HB8).